The primary structure comprises 157 residues: 6,7-dimethyl-8-ribityllumazine synthase 1 (157 aa).

5-amino-6-(D-ribitylamino)uracil-binding positions include Phe22, 53-55 (ALE), and 82-84 (TVI). 87-88 (ET) serves as a coordination point for (2S)-2-hydroxy-3-oxobutyl phosphate. Catalysis depends on His90, which acts as the Proton donor. Residue Asn115 participates in 5-amino-6-(D-ribitylamino)uracil binding. Arg129 is a (2S)-2-hydroxy-3-oxobutyl phosphate binding site.

Belongs to the DMRL synthase family. As to quaternary structure, homopentamer.

It carries out the reaction (2S)-2-hydroxy-3-oxobutyl phosphate + 5-amino-6-(D-ribitylamino)uracil = 6,7-dimethyl-8-(1-D-ribityl)lumazine + phosphate + 2 H2O + H(+). It functions in the pathway cofactor biosynthesis; riboflavin biosynthesis; riboflavin from 2-hydroxy-3-oxobutyl phosphate and 5-amino-6-(D-ribitylamino)uracil: step 1/2. In terms of biological role, catalyzes the formation of 6,7-dimethyl-8-ribityllumazine by condensation of 5-amino-6-(D-ribitylamino)uracil with 3,4-dihydroxy-2-butanone 4-phosphate. This is the penultimate step in the biosynthesis of riboflavin. The sequence is that of 6,7-dimethyl-8-ribityllumazine synthase 1 (ribH1) from Brucella melitensis biotype 1 (strain ATCC 23456 / CCUG 17765 / NCTC 10094 / 16M).